The sequence spans 378 residues: MTKMSNLPNDLAEEVLSRVSLTSLRNVRLTCKDWNTLSKGESFAKNHLGYQAIVAAKEKEFMMVLMMDFRVYLIRVNVHNDIESCIKPEGELISLGDEVDVSQVFHCDGLLLCITEDNEDNAKVVLWNPYWGQTRWIESTNNFHKLDMYTYALGYKKSSKSSRSYKILRFIDFSPTCSEFKIYNINSDSWKVLDVSPDWKIDSYIRGVSLKGNTYWIARERHGYGHTFLVCFDFTRERFRSRLPLPSQPCVLDTVSLSSVREEQLAVLFQCSSTLEMQIWVTTKIEPNAVLWNSKVFLAVDMHSLKFQFQVRASSFFIDEEKRVVVVFDKEKRYLASSRNKAYIVGVDGTWEQVDLGMSVDKFVYPLVCSYVPSLVHF.

The F-box domain occupies 1-47 (MTKMSNLPNDLAEEVLSRVSLTSLRNVRLTCKDWNTLSKGESFAKNH).

The chain is Putative F-box protein At3g24580 from Arabidopsis thaliana (Mouse-ear cress).